The primary structure comprises 292 residues: 4-hydroxy-tetrahydrodipicolinate synthase (292 aa).

T45 serves as a coordination point for pyruvate. Residue Y133 is the Proton donor/acceptor of the active site. The active-site Schiff-base intermediate with substrate is K162. Pyruvate is bound at residue I204.

This sequence belongs to the DapA family. As to quaternary structure, homotetramer; dimer of dimers.

The protein resides in the cytoplasm. It catalyses the reaction L-aspartate 4-semialdehyde + pyruvate = (2S,4S)-4-hydroxy-2,3,4,5-tetrahydrodipicolinate + H2O + H(+). Its pathway is amino-acid biosynthesis; L-lysine biosynthesis via DAP pathway; (S)-tetrahydrodipicolinate from L-aspartate: step 3/4. Functionally, catalyzes the condensation of (S)-aspartate-beta-semialdehyde [(S)-ASA] and pyruvate to 4-hydroxy-tetrahydrodipicolinate (HTPA). This Nitratidesulfovibrio vulgaris (strain DSM 19637 / Miyazaki F) (Desulfovibrio vulgaris) protein is 4-hydroxy-tetrahydrodipicolinate synthase.